The primary structure comprises 194 residues: Fe/S biogenesis protein NfuA (194 aa).

The [4Fe-4S] cluster site is built by Cys152 and Cys155.

It belongs to the NfuA family. As to quaternary structure, homodimer. Requires [4Fe-4S] cluster as cofactor.

Functionally, involved in iron-sulfur cluster biogenesis. Binds a 4Fe-4S cluster, can transfer this cluster to apoproteins, and thereby intervenes in the maturation of Fe/S proteins. Could also act as a scaffold/chaperone for damaged Fe/S proteins. This Pseudomonas aeruginosa (strain LESB58) protein is Fe/S biogenesis protein NfuA.